The chain runs to 82 residues: MKREQIEGVAEDLAGKAQSAVGRLVEDPALEAEGDARQAAGQVTKTYGDTLDTVSSFVKEKPFAALAITAAVTLVVSRLLRR.

It belongs to the UPF0337 (CsbD) family.

This Pseudomonas putida (strain ATCC 47054 / DSM 6125 / CFBP 8728 / NCIMB 11950 / KT2440) protein is UPF0337 protein PP_2059.